We begin with the raw amino-acid sequence, 644 residues long: 1-deoxy-D-xylulose-5-phosphate synthase (644 aa).

Residues histidine 78 and glycine 120 to alanine 122 each bind thiamine diphosphate. Aspartate 149 is a binding site for Mg(2+). Thiamine diphosphate-binding positions include alanine 150–alanine 151, asparagine 178, and glutamate 373. Asparagine 178 provides a ligand contact to Mg(2+).

The protein belongs to the transketolase family. DXPS subfamily. As to quaternary structure, homodimer. Mg(2+) is required as a cofactor. Thiamine diphosphate serves as cofactor.

The enzyme catalyses D-glyceraldehyde 3-phosphate + pyruvate + H(+) = 1-deoxy-D-xylulose 5-phosphate + CO2. The protein operates within metabolic intermediate biosynthesis; 1-deoxy-D-xylulose 5-phosphate biosynthesis; 1-deoxy-D-xylulose 5-phosphate from D-glyceraldehyde 3-phosphate and pyruvate: step 1/1. In terms of biological role, catalyzes the acyloin condensation reaction between C atoms 2 and 3 of pyruvate and glyceraldehyde 3-phosphate to yield 1-deoxy-D-xylulose-5-phosphate (DXP). In Chlamydia felis (strain Fe/C-56) (Chlamydophila felis), this protein is 1-deoxy-D-xylulose-5-phosphate synthase.